A 175-amino-acid polypeptide reads, in one-letter code: Calcineurin subunit B (175 aa).

4 EF-hand domains span residues 21-56 (PELM…ANNP), 60-88 (RMIA…FSSK), 90-125 (GRDE…MVGN), and 131-166 (QLQQ…TDIV). 20 residues coordinate Ca(2+): Asp-34, Asp-36, Ser-38, Ser-40, Glu-45, Asp-66, Asp-68, Ser-70, Thr-72, Glu-77, Asp-103, Asp-105, Asp-107, Tyr-109, Glu-114, Asp-144, Asp-146, Asp-148, Lys-150, and Glu-155.

This sequence belongs to the calcineurin regulatory subunit family. In terms of assembly, composed of a catalytic subunit (A) and a regulatory subunit (B).

In terms of biological role, regulatory subunit of calcineurin, a calcium-dependent, calmodulin stimulated protein phosphatase. Confers calcium sensitivity. Plays a central role in virulence and antifungal drug action. This Cryptococcus neoformans var. neoformans serotype D (strain B-3501A) (Filobasidiella neoformans) protein is Calcineurin subunit B (CNB1).